Reading from the N-terminus, the 300-residue chain is N-acetylmuramic acid 6-phosphate etherase (300 aa).

One can recognise an SIS domain in the interval 57-220 (IAVAFQCGGR…TTGAMIRTGK (164 aa)). Glu-85 acts as the Proton donor in catalysis. Glu-116 is an active-site residue.

This sequence belongs to the GCKR-like family. MurNAc-6-P etherase subfamily. Homodimer.

The catalysed reaction is N-acetyl-D-muramate 6-phosphate + H2O = N-acetyl-D-glucosamine 6-phosphate + (R)-lactate. It participates in amino-sugar metabolism; 1,6-anhydro-N-acetylmuramate degradation. The protein operates within amino-sugar metabolism; N-acetylmuramate degradation. It functions in the pathway cell wall biogenesis; peptidoglycan recycling. In terms of biological role, specifically catalyzes the cleavage of the D-lactyl ether substituent of MurNAc 6-phosphate, producing GlcNAc 6-phosphate and D-lactate. Together with AnmK, is also required for the utilization of anhydro-N-acetylmuramic acid (anhMurNAc) either imported from the medium or derived from its own cell wall murein, and thus plays a role in cell wall recycling. The sequence is that of N-acetylmuramic acid 6-phosphate etherase from Aliivibrio salmonicida (strain LFI1238) (Vibrio salmonicida (strain LFI1238)).